The following is a 299-amino-acid chain: Acetaldehyde dehydrogenase 1 (299 aa).

Cys-130 (acyl-thioester intermediate) is an active-site residue. NAD(+) contacts are provided by residues 161-169 (SVGPGTRKN) and Asn-272.

The protein belongs to the acetaldehyde dehydrogenase family.

The catalysed reaction is acetaldehyde + NAD(+) + CoA = acetyl-CoA + NADH + H(+). The polypeptide is Acetaldehyde dehydrogenase 1 (mhpF) (Burkholderia cenocepacia (strain ATCC BAA-245 / DSM 16553 / LMG 16656 / NCTC 13227 / J2315 / CF5610) (Burkholderia cepacia (strain J2315))).